Consider the following 291-residue polypeptide: Trimeric intracellular cation channel type B (291 aa).

At 1-19 (MDSPWDELALAFSRTSMFP) the chain is on the lumenal side. A helical transmembrane segment spans residues 20-33 (FFDIAHYLVSVMAV). The Cytoplasmic portion of the chain corresponds to 34-50 (KRQPGAAALAWKNPISS). The helical transmembrane segment at 51–70 (WFTAMLHCFGGGILSCLLLA) threads the bilayer. Topologically, residues 71–82 (EPPLKFLANHTN) are lumenal. Residues 83-99 (ILLASSIWYITFFCPHD) traverse the membrane as a helical segment. Topologically, residues 100–104 (LVSQG) are cytoplasmic. A helical membrane pass occupies residues 105 to 121 (YSYLPVQLLASGMKEVT). A 1,2-diacyl-sn-glycero-3-phospho-(1D-myo-inositol-4,5-bisphosphate)-binding residues include K118 and R122. Residues 122-139 (RTWKIVGGVTHANSYYKN) lie on the Lumenal side of the membrane. The helical transmembrane segment at 140-156 (GWIVMIAIGWARGAGGT) threads the bilayer. Residues 157–179 (IITNFERLVKGDWKPEGDEWLKM) lie on the Cytoplasmic side of the membrane. Residues 180-195 (SYPAKVTLLGSVIFTF) form a helical membrane-spanning segment. Residues 196 to 207 (QHTQHLAISKHN) are Lumenal-facing. The chain crosses the membrane as a helical span at residues 208 to 227 (LMFLYTIFIVATKITMMTTQ). Topologically, residues 228–291 (TSTMTFAPFE…VKKKHTKKNE (64 aa)) are cytoplasmic. Residues 256-291 (KKSEAKSPSNGVGSLASKPVDVASDNVKKKHTKKNE) form a disordered region. At S262 the chain carries Phosphoserine.

It belongs to the TMEM38 family. Homotrimer; conformation seems to be controled by binding to diacylglycerol (DAG).

The protein resides in the endoplasmic reticulum membrane. It carries out the reaction K(+)(in) = K(+)(out). With respect to regulation, channel activity is activated by increased cytosolic Ca(2+) levels and blocked by luminal high Ca(2+) levels. Functionally, intracellular monovalent cation channel required for maintenance of rapid intracellular calcium release. Acts as a potassium counter-ion channel that functions in synchronization with calcium release from intracellular stores. Activated by increased cytosolic Ca(2+) levels. The protein is Trimeric intracellular cation channel type B of Homo sapiens (Human).